Here is a 421-residue protein sequence, read N- to C-terminus: UDP-N-acetylglucosamine 1-carboxyvinyltransferase (421 aa).

22 to 23 is a binding site for phosphoenolpyruvate; that stretch reads KN. Arg-93 lines the UDP-N-acetyl-alpha-D-glucosamine pocket. Cys-117 serves as the catalytic Proton donor. Residue Cys-117 is modified to 2-(S-cysteinyl)pyruvic acid O-phosphothioketal. Residues 122–126, Asp-308, and Val-330 each bind UDP-N-acetyl-alpha-D-glucosamine; that span reads RPVDL.

This sequence belongs to the EPSP synthase family. MurA subfamily.

The protein resides in the cytoplasm. It catalyses the reaction phosphoenolpyruvate + UDP-N-acetyl-alpha-D-glucosamine = UDP-N-acetyl-3-O-(1-carboxyvinyl)-alpha-D-glucosamine + phosphate. Its pathway is cell wall biogenesis; peptidoglycan biosynthesis. Functionally, cell wall formation. Adds enolpyruvyl to UDP-N-acetylglucosamine. This Ectopseudomonas mendocina (strain ymp) (Pseudomonas mendocina) protein is UDP-N-acetylglucosamine 1-carboxyvinyltransferase.